Reading from the N-terminus, the 367-residue chain is HTH-type transcriptional regulator GbdR (367 aa).

The HTH araC/xylS-type domain maps to 227–325 (QEIVALMEAN…GIPPRDERQG (99 aa)). 2 DNA-binding regions (H-T-H motif) span residues 244 to 265 (DELA…QKYL) and 292 to 315 (IIEV…REYF).

Specific regulator of choline metabolism, which activates transcription of at least 25 genes from 11 promoters in response to choline metabolites. Required for the induction of plcH, encoding the phospholipase C, and pchP, encoding the phosphorylcholine phosphatase, in response to glycine betaine (GB) and dimethylglycine (DMG). Also controls the expression of gbcAB and dgcAB, which are required for GB and DMG degradation, respectively, in response to both GB and DMG. The GbdR regulon also includes genes encoding sarcosine, glycine and serine catabolic enzymes, the BetX and CbcXWV quaternary amine transport proteins and the acetylcholine esterase gene, choE. Acts by binding directly to the promoter region of the genes. May play an important role during P.aeruginosa interactions with eukaryotes. This Pseudomonas aeruginosa (strain UCBPP-PA14) protein is HTH-type transcriptional regulator GbdR.